We begin with the raw amino-acid sequence, 288 residues long: 4-hydroxybenzoate octaprenyltransferase (288 aa).

6 helical membrane passes run Leu33–Val53, Leu99–Ile119, Glu163–Tyr183, Leu213–Asn233, Gly234–Gln254, and Ala268–Leu288.

This sequence belongs to the UbiA prenyltransferase family. It depends on Mg(2+) as a cofactor.

The protein localises to the cell inner membrane. The enzyme catalyses all-trans-octaprenyl diphosphate + 4-hydroxybenzoate = 4-hydroxy-3-(all-trans-octaprenyl)benzoate + diphosphate. Its pathway is cofactor biosynthesis; ubiquinone biosynthesis. Functionally, catalyzes the prenylation of para-hydroxybenzoate (PHB) with an all-trans polyprenyl group. Mediates the second step in the final reaction sequence of ubiquinone-8 (UQ-8) biosynthesis, which is the condensation of the polyisoprenoid side chain with PHB, generating the first membrane-bound Q intermediate 3-octaprenyl-4-hydroxybenzoate. The sequence is that of 4-hydroxybenzoate octaprenyltransferase from Klebsiella pneumoniae subsp. pneumoniae (strain ATCC 700721 / MGH 78578).